The chain runs to 258 residues: Imidazole glycerol phosphate synthase subunit HisF (258 aa).

Active-site residues include Asp11 and Asp130.

This sequence belongs to the HisA/HisF family. Heterodimer of HisH and HisF.

The protein resides in the cytoplasm. It carries out the reaction 5-[(5-phospho-1-deoxy-D-ribulos-1-ylimino)methylamino]-1-(5-phospho-beta-D-ribosyl)imidazole-4-carboxamide + L-glutamine = D-erythro-1-(imidazol-4-yl)glycerol 3-phosphate + 5-amino-1-(5-phospho-beta-D-ribosyl)imidazole-4-carboxamide + L-glutamate + H(+). Its pathway is amino-acid biosynthesis; L-histidine biosynthesis; L-histidine from 5-phospho-alpha-D-ribose 1-diphosphate: step 5/9. Functionally, IGPS catalyzes the conversion of PRFAR and glutamine to IGP, AICAR and glutamate. The HisF subunit catalyzes the cyclization activity that produces IGP and AICAR from PRFAR using the ammonia provided by the HisH subunit. This is Imidazole glycerol phosphate synthase subunit HisF from Nitrobacter winogradskyi (strain ATCC 25391 / DSM 10237 / CIP 104748 / NCIMB 11846 / Nb-255).